Reading from the N-terminus, the 220-residue chain is Large ribosomal subunit protein uL16 (220 aa).

Belongs to the universal ribosomal protein uL16 family. As to quaternary structure, component of the small ribosomal subunit. Mature ribosomes consist of a small (40S) and a large (60S) subunit. The 40S subunit contains about 33 different proteins and 1 molecule of RNA (18S). The 60S subunit contains about 49 different proteins and 3 molecules of RNA (25S, 5.8S and 5S).

The protein is Large ribosomal subunit protein uL16 (RPL10) of Zea mays (Maize).